Reading from the N-terminus, the 364-residue chain is Ferrochelatase (364 aa).

Residues His-210 and Glu-291 each coordinate Fe cation.

This sequence belongs to the ferrochelatase family.

It localises to the cytoplasm. It carries out the reaction heme b + 2 H(+) = protoporphyrin IX + Fe(2+). Its pathway is porphyrin-containing compound metabolism; protoheme biosynthesis; protoheme from protoporphyrin-IX: step 1/1. In terms of biological role, catalyzes the ferrous insertion into protoporphyrin IX. The polypeptide is Ferrochelatase (Idiomarina loihiensis (strain ATCC BAA-735 / DSM 15497 / L2-TR)).